The primary structure comprises 326 residues: Malate dehydrogenase (326 aa).

Residue 11-17 coordinates NAD(+); the sequence is GAAGQIG. Arg92 and Arg98 together coordinate substrate. NAD(+) is bound by residues Asn105, Gln112, and 129–131; that span reads VGN. Residues Asn131 and Arg162 each contribute to the substrate site. His187 (proton acceptor) is an active-site residue.

It belongs to the LDH/MDH superfamily. MDH type 2 family.

It catalyses the reaction (S)-malate + NAD(+) = oxaloacetate + NADH + H(+). Catalyzes the reversible oxidation of malate to oxaloacetate. The chain is Malate dehydrogenase from Leptospira borgpetersenii serovar Hardjo-bovis (strain JB197).